The primary structure comprises 358 residues: Protein RecA (358 aa).

67-74 (GPESSGKT) provides a ligand contact to ATP.

This sequence belongs to the RecA family.

Its subcellular location is the cytoplasm. Its function is as follows. Can catalyze the hydrolysis of ATP in the presence of single-stranded DNA, the ATP-dependent uptake of single-stranded DNA by duplex DNA, and the ATP-dependent hybridization of homologous single-stranded DNAs. It interacts with LexA causing its activation and leading to its autocatalytic cleavage. This Xenorhabdus bovienii (Xenorhabdus nematophila subsp. bovienii) protein is Protein RecA.